The sequence spans 298 residues: Methylsterol monooxygenase 1-1 (298 aa).

3 helical membrane-spanning segments follow: residues 42–62, 96–116, and 118–138; these read ILFL…VELA, FILV…MIEI, and SGLP…YFLI. The Fatty acid hydroxylase domain maps to 132–267; it reads LVVYFLIEDY…FTYCDYIYGT (136 aa). Residues 147 to 151 carry the Histidine box-1 motif; that stretch reads HRFFH. Positions 160 to 164 match the Histidine box-2 motif; it reads HRVHH. The chain crosses the membrane as a helical span at residues 189–209; sequence TFMGPAIAPGHMITFWLWIAL. The Histidine box-3 signature appears at 239-245; that stretch reads YHDYHHY.

This sequence belongs to the sterol desaturase family. In terms of assembly, interacts with ACBP1. Fe cation serves as cofactor. Expressed in rosettes, stems, roots, floral buds, flowers and siliques.

It localises to the endoplasmic reticulum membrane. The catalysed reaction is 4,4-dimethyl-5alpha-cholest-7-en-3beta-ol + 6 Fe(II)-[cytochrome b5] + 3 O2 + 5 H(+) = 4alpha-carboxy-4beta-methyl-5alpha-cholest-7-ene-3beta-ol + 6 Fe(III)-[cytochrome b5] + 4 H2O. It catalyses the reaction 24-methylenecycloartanol + 6 Fe(II)-[cytochrome b5] + 3 O2 + 5 H(+) = 4alpha-carboxy-4beta,14alpha-dimethyl-9beta,19-cyclo-5alpha-ergost-24(24(1))-en-3beta-ol + 6 Fe(III)-[cytochrome b5] + 4 H2O. Functionally, non-heme iron oxygenase involved in sterols biosynthesis by catalyzing the removal of the first methyl group at the C-4 position. 4,4-dimethyl-9-beta,19-cyclopropylsterols such as 24-methylenecycloartanol are the preferred substrates. Acts as a rate-limiting enzyme in the sterol pathway via interaction with ACBP1; sterols serve as lipid modulators for gene expression of homeodomain-leucine zipper IV transcription factors. Together with SMO1-2, involved in the maintenance of sterol composition to balance auxin and cytokinin activities during embryogenesis. This Arabidopsis thaliana (Mouse-ear cress) protein is Methylsterol monooxygenase 1-1.